The following is a 404-amino-acid chain: Phosphopentomutase (404 aa).

Mn(2+)-binding residues include Asp10, Asp297, His302, Asp338, His339, and His350.

Belongs to the phosphopentomutase family. Mn(2+) serves as cofactor.

Its subcellular location is the cytoplasm. The catalysed reaction is 2-deoxy-alpha-D-ribose 1-phosphate = 2-deoxy-D-ribose 5-phosphate. It carries out the reaction alpha-D-ribose 1-phosphate = D-ribose 5-phosphate. Its pathway is carbohydrate degradation; 2-deoxy-D-ribose 1-phosphate degradation; D-glyceraldehyde 3-phosphate and acetaldehyde from 2-deoxy-alpha-D-ribose 1-phosphate: step 1/2. Its function is as follows. Isomerase that catalyzes the conversion of deoxy-ribose 1-phosphate (dRib-1-P) and ribose 1-phosphate (Rib-1-P) to deoxy-ribose 5-phosphate (dRib-5-P) and ribose 5-phosphate (Rib-5-P), respectively. This chain is Phosphopentomutase, found in Colwellia psychrerythraea (strain 34H / ATCC BAA-681) (Vibrio psychroerythus).